Reading from the N-terminus, the 688-residue chain is PTS system glucoside-specific EIICBA component (688 aa).

Residues 3-427 enclose the PTS EIIC type-1 domain; the sequence is KKLFGQLQRI…FKLKTPGRED (425 aa). 10 helical membrane passes run 12–32, 81–101, 137–157, 182–202, 223–243, 284–304, 315–335, 340–360, 364–384, and 395–415; these read IGKA…LLAF, LGLA…YLIM, LVLG…MGAL, FVPI…SFAW, LTTF…LHHI, AFTT…AFAI, VVGG…ITEP, FLFV…TSFL, LLGV…ILYG, and LVIP…DFAI. The 82-residue stretch at 438–519 folds into the PTS EIIB type-1 domain; it reads AKLPFDVLDA…AKIMSGEITK (82 aa). Cys460 (phosphocysteine intermediate; for EIIB activity) is an active-site residue. Residues 560-664 form the PTS EIIA type-1 domain; the sequence is DQVFAGKMMG…SIVTPMIITN (105 aa). His612 acts as the Tele-phosphohistidine intermediate; for EIIA activity in catalysis.

The protein localises to the cell membrane. Functionally, the phosphoenolpyruvate-dependent sugar phosphotransferase system (sugar PTS), a major carbohydrate active -transport system, catalyzes the phosphorylation of incoming sugar substrates concomitantly with their translocation across the cell membrane. This system is involved in alpha- and beta-glucoside transport. The sequence is that of PTS system glucoside-specific EIICBA component (glcB) from Staphylococcus aureus (strain JH1).